The primary structure comprises 264 residues: Alkaline ceramidase 1 (264 aa).

The Lumenal portion of the chain corresponds to 1–27 (MPSIFAYQSSEVDWCESNFQYSELVAE). Residues aspartate 13, tryptophan 14, glutamate 16, asparagine 18, and glutamate 27 each contribute to the Ca(2+) site. A helical membrane pass occupies residues 28–48 (FYNTFSNIPFFIFGPLMMLLM). Topologically, residues 49–57 (HPYAQKRSR) are cytoplasmic. Residues 58–78 (YIYVVWVLFMIIGLFSMYFHM) traverse the membrane as a helical segment. Residue histidine 77 coordinates Zn(2+). Over 79-81 (TLS) the chain is Lumenal. Residues 82–102 (FLGQLLDEIAILWLLGSGYSI) form a helical membrane-spanning segment. Topologically, residues 103-119 (WMPRCYFPSFLGGNRSQ) are cytoplasmic. Residues 120-137 (FIRLVFITTVVSTLLSFL) traverse the membrane as a helical segment. A topological domain (lumenal) is located at residue arginine 138. A helical transmembrane segment spans residues 139-159 (PTVNAYALNSIALHILYIVCQ). The Cytoplasmic portion of the chain corresponds to 160–176 (EYRKTSNKELRHLIEVS). The helical transmembrane segment at 177-197 (VVLWAVALTSWISDRLLCSFW) threads the bilayer. The Lumenal portion of the chain corresponds to 198–206 (QRIHFFYLH). Histidine 206 and histidine 210 together coordinate Zn(2+). Residues 207–227 (SIWHVLISITFPYGMVTMALV) form a helical membrane-spanning segment. Over 228–264 (DANYEMPGETLKVRYWPRDSWPVGLPYVEIRGDDKDC) the chain is Cytoplasmic.

Belongs to the alkaline ceramidase family. Zn(2+) is required as a cofactor. In terms of tissue distribution, mainly expressed in epidermis.

It is found in the endoplasmic reticulum membrane. It carries out the reaction an N-acylsphing-4-enine + H2O = sphing-4-enine + a fatty acid. The enzyme catalyses N-tetracosanoyl-sphing-4-enine + H2O = tetracosanoate + sphing-4-enine. It catalyses the reaction an N-acylsphinganine + H2O = sphinganine + a fatty acid. The catalysed reaction is N-(9Z-octadecenoyl)-sphing-4-enine + H2O = sphing-4-enine + (9Z)-octadecenoate. It carries out the reaction N-(15Z-tetracosenoyl)-sphing-4-enine + H2O = (15Z)-tetracosenoate + sphing-4-enine. Its pathway is lipid metabolism; sphingolipid metabolism. Its activity is regulated as follows. Inhibited by sphingosine. Activity is Ca(2+)-dependent. Endoplasmic reticulum ceramidase that catalyzes the hydrolysis of ceramides into sphingosine and free fatty acids at alkaline pH. Ceramides, sphingosine, and its phosphorylated form sphingosine-1-phosphate are bioactive lipids that mediate cellular signaling pathways regulating several biological processes including cell proliferation, apoptosis and differentiation. Exhibits a strong substrate specificity towards the natural stereoisomer of ceramides with D-erythro-sphingosine as a backbone and has a higher activity towards very long-chain unsaturated fatty acids like the C24:1-ceramide. May also hydrolyze dihydroceramides to produce dihydrosphingosine. ACER1 is a skin-specific ceramidase that regulates the levels of ceramides, sphingosine and sphingosine-1-phosphate in the epidermis, mediates the calcium-induced differentiation of epidermal keratinocytes and more generally plays an important role in skin homeostasis. The sequence is that of Alkaline ceramidase 1 from Homo sapiens (Human).